A 312-amino-acid polypeptide reads, in one-letter code: uncharacterized protein (312 aa).

The protein localises to the mitochondrion. This is an uncharacterized protein from Schizosaccharomyces pombe (strain 972 / ATCC 24843) (Fission yeast).